The sequence spans 319 residues: Protease HtpX homolog (319 aa).

Transmembrane regions (helical) follow at residues 3–23 and 32–52; these read LTVLALIGGYIVVLGVAAWAL and TGVAFMLSLLALAMVLVQWLF. Histidine 134 is a Zn(2+) binding site. Glutamate 135 is an active-site residue. Residue histidine 138 participates in Zn(2+) binding. Transmembrane regions (helical) follow at residues 146–166 and 182–202; these read VILALSLIPIAAFLIGRTLVW and MALVAVGAALLAAGMVFQLIV. Position 210 (glutamate 210) interacts with Zn(2+).

The protein belongs to the peptidase M48B family. Requires Zn(2+) as cofactor.

The protein resides in the cell membrane. The chain is Protease HtpX homolog from Aeropyrum pernix (strain ATCC 700893 / DSM 11879 / JCM 9820 / NBRC 100138 / K1).